The following is a 770-amino-acid chain: Amyloid-beta precursor protein (770 aa).

Residues 1-17 form the signal peptide; the sequence is MLPSLALLLLTTWTARA. Topologically, residues 18-701 are extracellular; it reads LEVPTDGNAG…AEDVGSNKGA (684 aa). The interval 28–123 is GFLD subdomain; the sequence is LLAEPQIAMF…PYRCLVGEFV (96 aa). One can recognise an E1 domain in the interval 28–189; that stretch reads LLAEPQIAMF…RGVEFVCCPL (162 aa). 6 cysteine pairs are disulfide-bonded: Cys-38–Cys-62, Cys-73–Cys-117, Cys-98–Cys-105, Cys-133–Cys-187, Cys-144–Cys-174, and Cys-158–Cys-186. Position 96–110 (96–110) interacts with heparin; it reads NWCKRSRKQCKTHPH. The segment at 131–189 is cuBD subdomain; sequence DKCKFLHQERMDVCETHLHWHTVAKETCSEKSTNLHDYGMLLPCGIDKFRGVEFVCCPL. Residues 135–155 are copper-binding; that stretch reads FLHQERMDVCETHLHWHTVAK. The Cu(2+) site is built by His-147, His-151, and Tyr-168. The segment at 181 to 188 is zinc-binding; that stretch reads GVEFVCCP. Zn(2+) is bound by residues Glu-183, Cys-186, and Cys-187. A compositionally biased stretch (acidic residues) spans 196–207; sequence IDSADAEEDDSD. A disordered region spans residues 196 to 281; the sequence is IDSADAEEDD…IATTTTTTTE (86 aa). Phosphoserine; by CK2 is present on Ser-198. Ser-206 is subject to Phosphoserine; by CK1. At Tyr-217 the chain carries Sulfotyrosine. Over residues 228–264 the composition is skewed to acidic residues; that stretch reads VAEEEEVADVEEEEADDDEDVEDGDEVEEEAEEPYEE. Over residues 268–281 the composition is skewed to low complexity; sequence KTTSIATTTTTTTE. Disulfide bonds link Cys-291-Cys-341, Cys-300-Cys-324, and Cys-316-Cys-337. The BPTI/Kunitz inhibitor domain occupies 291–341; it reads CSEQAETGPCRSMISRWYFDVTEGKCAPFFYGGCGGNRNNFDTEEYCMAVC. The residue at position 336 (Tyr-336) is a Sulfotyrosine. Positions 344–365 match the OX-2 motif; the sequence is VMSQNLLKTSGEPVSQGPVKLP. The E2 domain maps to 374 to 565; the sequence is AVDKYLETPG…EEIQDEVDEL (192 aa). Residues 391–423 form a heparin-binding region; the sequence is FQKAKERLEAKHRERMSQVMREWEEAERQAKNL. Ser-441 is subject to Phosphoserine. The heparin-binding stretch occupies residues 491–522; the sequence is FNMLKKYVRAEQKDRQHTLKHFEHVRMVDPKK. Tyr-497 is subject to Phosphotyrosine. The segment at 523-540 is collagen-binding; sequence AAQIRSQVMTHLRVIYER. Asn-542 and Asn-571 each carry an N-linked (GlcNAc...) asparagine glycan. The O-linked (Xyl...) (chondroitin sulfate) serine glycan is linked to Ser-656. Residues His-677, Tyr-681, His-684, and His-685 each contribute to the Cu(2+) site. Positions 677, 681, 684, and 685 each coordinate Zn(2+). The segment at 695-722 is interaction with PSEN1; it reads VGSNKGAIIGLMVGGVVIATVIVITLVM. A helical membrane pass occupies residues 702 to 722; the sequence is IIGLMVGGVVIATVIVITLVM. Topologically, residues 723 to 770 are cytoplasmic; the sequence is LKKKQYTSIHHGVVEVDAAVTPEERHLSKMQQNGYENPTYKFFEQMQN. Positions 724 to 734 match the Basolateral sorting signal motif; that stretch reads KKKQYTSIHHG. The residue at position 729 (Thr-729) is a Phosphothreonine. Residue Ser-730 is modified to Phosphoserine; by APP-kinase I. An interaction with G(o)-alpha region spans residues 732–751; it reads HHGVVEVDAAVTPEERHLSK. The residue at position 743 (Thr-743) is a Phosphothreonine; by CDK5 and MAPK10. The interval 756–770 is required for the interaction with KIF5B and for anterograde transport in axons; the sequence is GYENPTYKFFEQMQN. Phosphotyrosine; by ABL1 is present on Tyr-757. The short motif at 757 to 762 is the YENPXY motif; contains endocytosis signal element; that stretch reads YENPTY. Lys-763 is covalently cross-linked (Glycyl lysine isopeptide (Lys-Gly) (interchain with G-Cter in ubiquitin)).

The protein belongs to the APP family. Binds, via its C-terminus, to the PID domain of several cytoplasmic proteins, including APBB family members, the APBA family, MAPK8IP1, SHC1 and NUMB and DAB1. Binding to DAB1 inhibits its serine phosphorylation. Interacts (via NPXY motif) with DAB2 (via PID domain); the interaction is impaired by tyrosine phosphorylation of the NPXY motif. Also interacts with GPCR-like protein BPP, APPBP1, IB1, KNS2 (via its TPR domains), APPBP2 (via BaSS) and DDB1. In vitro, it binds MAPT via the MT-binding domains. Associates with microtubules in the presence of ATP and in a kinesin-dependent manner. Interacts, through a C-terminal domain, with GNAO1. Amyloid-beta protein 42 binds CHRNA7 in hippocampal neurons. Amyloid-beta associates with HADH2. Interacts with CPEB1, ANKS1B and AGER. Interacts with ITM2B. Interacts with ITM2C. Interacts with IDE. Can form homodimers; dimerization is enhanced in the presence of Cu(2+) ions. Can form homodimers; this is promoted by heparin binding. Amyloid-beta protein 40 interacts with S100A9. CTF-alpha product of APP interacts with GSAP. Isoform APP695 interacts with SORL1 (via N-terminal ectodomain); this interaction retains APP in the trans-Golgi network and reduces processing into soluble APP-alpha and amyloid-beta peptides. Isoform APP770 interacts with SORL1. The C99 fragment also interacts with SORL1. Interacts with PLD3. Interacts with VDAC1. Interacts with NSG1; could regulate APP processing. Amyloid-beta protein 42 interacts with FPR2. Interacts (via transmembrane region) with PSEN1; the interaction is direct. Interacts with LRRK2. Interacts (via cytoplasmic domain) with KIF5B. Interacts (via C-terminus) with APBB2/FE65L1 (via C-terminus). Interacts (via intracellular domain) with APBB3. Proteolytically processed under normal cellular conditions. Cleavage either by alpha-secretase, beta-secretase or theta-secretase leads to generation and extracellular release of soluble APP peptides, S-APP-alpha and S-APP-beta, and the retention of corresponding membrane-anchored C-terminal fragments, C80, C83 and C99. Subsequent processing of C80 and C83 by gamma-secretase yields P3 peptides. This is the major secretory pathway and is non-amyloidogenic. Alternatively, presenilin/nicastrin-mediated gamma-secretase processing of C99 releases the amyloid-beta proteins, amyloid-beta protein 40 and amyloid-beta protein 42, major components of amyloid plaques, and the cytotoxic C-terminal fragments, gamma-CTF(50), gamma-CTF(57) and gamma-CTF(59). PSEN1 cleavage is more efficient with C83 than with C99 as substrate (in vitro). Amyloid-beta protein 40 and Amyloid-beta protein 42 are cleaved by ACE. Many other minor amyloid-beta peptides, amyloid-beta 1-X peptides, are found in cerebral spinal fluid (CSF) including the amyloid-beta X-15 peptides, produced from the cleavage by alpha-secretase. In terms of processing, proteolytically cleaved by caspases during neuronal apoptosis. Cleavage at Asp-739 by either CASP6, CASP8 or CASP9 results in the production of the neurotoxic C31 peptide and the increased production of amyloid-beta peptides. Post-translationally, N- and O-glycosylated. Phosphorylation in the C-terminal on tyrosine, threonine and serine residues is neuron-specific. Phosphorylation can affect APP processing, neuronal differentiation and interaction with other proteins. Phosphorylated on Thr-743 in neuronal cells by Cdc5 kinase and Mapk10, in dividing cells by Cdc2 kinase in a cell-cycle dependent manner with maximal levels at the G2/M phase and, in vitro, by GSK-3-beta. The Thr-743 phosphorylated form causes a conformational change which reduces binding of Fe65 family members. In dopaminergic (DA) neurons, phosphorylation on Thr-743 by LRKK2 promotes the production and the nuclear translocation of the APP intracellular domain (AICD) which induces DA neuron apoptosis. Phosphorylation on Tyr-757 is required for SHC binding. Phosphorylated in the extracellular domain by casein kinases on both soluble and membrane-bound APP. This phosphorylation is inhibited by heparin. In terms of processing, N- and O-glycosylated. O-linkage of chondroitin sulfate to the L-APP isoforms produces the APP proteoglycan core proteins, the appicans. Post-translationally, extracellular binding and reduction of copper, results in a corresponding oxidation of Cys-144 and Cys-158, and the formation of a disulfide bond. Trophic-factor deprivation triggers the cleavage of surface APP by beta-secretase to release sAPP-beta which is further cleaved to release an N-terminal fragment of APP (N-APP). In terms of processing, amyloid-beta peptides are degraded by IDE. Post-translationally, sulfated on tyrosine residues. In terms of tissue distribution, isoform APP695 is the major isoform found in brain. The longer isoforms containing the BPTI domain are predominantly expressed in peripheral organs such as muscle and liver.

It is found in the cell membrane. The protein resides in the membrane. The protein localises to the perikaryon. It localises to the cell projection. Its subcellular location is the growth cone. It is found in the clathrin-coated pit. The protein resides in the early endosome. The protein localises to the cytoplasmic vesicle. It localises to the endoplasmic reticulum. Its subcellular location is the golgi apparatus. It is found in the secreted. The protein resides in the cell surface. The protein localises to the nucleus. It localises to the cytoplasm. In terms of biological role, functions as a cell surface receptor and performs physiological functions on the surface of neurons relevant to neurite growth, neuronal adhesion and axonogenesis. Interaction between APP molecules on neighboring cells promotes synaptogenesis. Involved in cell mobility and transcription regulation through protein-protein interactions. Can promote transcription activation through binding to APBB1-KAT5 and inhibit Notch signaling through interaction with Numb. Couples to apoptosis-inducing pathways such as those mediated by G(o) and JIP. Inhibits G(o)-alpha ATPase activity. Acts as a kinesin I membrane receptor, mediating the axonal transport of beta-secretase and presenilin 1. By acting as a kinesin I membrane receptor, plays a role in axonal anterograde transport of cargo towards synapses in axons. May be involved in copper homeostasis/oxidative stress through copper ion reduction. In vitro, copper-metallated APP induces neuronal death directly or is potentiated through Cu(2+)-mediated low-density lipoprotein oxidation. Can regulate neurite outgrowth through binding to components of the extracellular matrix such as heparin and collagen I and IV. Induces a AGER-dependent pathway that involves activation of p38 MAPK, resulting in internalization of amyloid-beta peptide and mitochondrial dysfunction in cultured cortical neurons. Provides Cu(2+) ions for GPC1 which are required for release of nitric oxide (NO) and subsequent degradation of the heparan sulfate chains on GPC1. Amyloid-beta peptides are lipophilic metal chelators with metal-reducing activity. Binds transient metals such as copper, zinc and iron. Amyloid-beta peptides bind to lipoproteins and apolipoproteins E and J in the CSF and to HDL particles in plasma, inhibiting metal-catalyzed oxidation of lipoproteins. Also bind GPC1 in lipid rafts. Functionally, appicans elicit adhesion of neural cells to the extracellular matrix and may regulate neurite outgrowth in the brain. Its function is as follows. The gamma-CTF peptides as well as the caspase-cleaved peptides, including C31, are potent enhancers of neuronal apoptosis. The sequence is that of Amyloid-beta precursor protein from Cavia porcellus (Guinea pig).